We begin with the raw amino-acid sequence, 435 residues long: Tol-Pal system protein TolB (435 aa).

An N-terminal signal peptide occupies residues 1-20 (MRKIIAGVFIFVFLISNLYA).

This sequence belongs to the TolB family. In terms of assembly, the Tol-Pal system is composed of five core proteins: the inner membrane proteins TolA, TolQ and TolR, the periplasmic protein TolB and the outer membrane protein Pal. They form a network linking the inner and outer membranes and the peptidoglycan layer.

The protein resides in the periplasm. Its function is as follows. Part of the Tol-Pal system, which plays a role in outer membrane invagination during cell division and is important for maintaining outer membrane integrity. This Francisella tularensis subsp. holarctica (strain LVS) protein is Tol-Pal system protein TolB.